The primary structure comprises 160 residues: MAEKTYPMTLTEKEQLEKELEELKLVRRPEIVERIKIARSYGDLSENSEYDAAKDEQAFVEGQISTLETKIRYAEIIDSDAVAKDEVAIGKTVIVQEVGTTDKDTYHIVGAAGADIFSGKISNESPIAQALIGKKTGDKVRIESPAATYDVEIISVEKTN.

The stretch at 1–71 (MAEKTYPMTL…GQISTLETKI (71 aa)) forms a coiled coil.

The protein belongs to the GreA/GreB family.

Necessary for efficient RNA polymerase transcription elongation past template-encoded arresting sites. The arresting sites in DNA have the property of trapping a certain fraction of elongating RNA polymerases that pass through, resulting in locked ternary complexes. Cleavage of the nascent transcript by cleavage factors such as GreA or GreB allows the resumption of elongation from the new 3'terminus. GreA releases sequences of 2 to 3 nucleotides. The sequence is that of Transcription elongation factor GreA from Streptococcus pyogenes serotype M3 (strain ATCC BAA-595 / MGAS315).